Here is a 94-residue protein sequence, read N- to C-terminus: ATP synthase subunit c (94 aa).

2 helical membrane-spanning segments follow: residues 15-35 (VSVG…WGLI) and 61-81 (GGLM…FIFA).

It belongs to the ATPase C chain family. As to quaternary structure, F-type ATPases have 2 components, F(1) - the catalytic core - and F(0) - the membrane proton channel. F(1) has five subunits: alpha(3), beta(3), gamma(1), delta(1), epsilon(1). F(0) has three main subunits: a(1), b(2) and c(10-14). The alpha and beta chains form an alternating ring which encloses part of the gamma chain. F(1) is attached to F(0) by a central stalk formed by the gamma and epsilon chains, while a peripheral stalk is formed by the delta and b chains.

It localises to the cell inner membrane. Its function is as follows. F(1)F(0) ATP synthase produces ATP from ADP in the presence of a proton or sodium gradient. F-type ATPases consist of two structural domains, F(1) containing the extramembraneous catalytic core and F(0) containing the membrane proton channel, linked together by a central stalk and a peripheral stalk. During catalysis, ATP synthesis in the catalytic domain of F(1) is coupled via a rotary mechanism of the central stalk subunits to proton translocation. Key component of the F(0) channel; it plays a direct role in translocation across the membrane. A homomeric c-ring of between 10-14 subunits forms the central stalk rotor element with the F(1) delta and epsilon subunits. In Nitrosococcus oceani (strain ATCC 19707 / BCRC 17464 / JCM 30415 / NCIMB 11848 / C-107), this protein is ATP synthase subunit c.